A 508-amino-acid polypeptide reads, in one-letter code: Maturase K (508 aa).

Belongs to the intron maturase 2 family. MatK subfamily.

Its subcellular location is the plastid. The protein localises to the chloroplast. Usually encoded in the trnK tRNA gene intron. Probably assists in splicing its own and other chloroplast group II introns. The protein is Maturase K of Cunninghamia lanceolata (China fir).